The primary structure comprises 102 residues: Large ribosomal subunit protein bL21 (102 aa).

The protein belongs to the bacterial ribosomal protein bL21 family. As to quaternary structure, part of the 50S ribosomal subunit. Contacts protein L20.

In terms of biological role, this protein binds to 23S rRNA in the presence of protein L20. In Leifsonia xyli subsp. xyli (strain CTCB07), this protein is Large ribosomal subunit protein bL21.